Reading from the N-terminus, the 240-residue chain is Aquaporin Z (240 aa).

Helical transmembrane passes span 10–30 (AIGTFWLTFAGCGSAVIAAGF) and 35–55 (IGLVGVSLAFGLSVVTMAYAI). The NPA 1 motif lies at 64-66 (NPA). A run of 3 helical transmembrane segments spans residues 82 to 102 (ILPYVIAQVCGAIVAAELLYI), 131 to 151 (MMACFLTEVVMTMMFLFIIMG), and 160 to 180 (GFAPLAIGLALVMIHLVSIPV). The short motif at 186 to 188 (NPA) is the NPA 2 element. A helical membrane pass occupies residues 194–214 (ALFVGGWAMAQLWLFWVAPLI).

The protein belongs to the MIP/aquaporin (TC 1.A.8) family. As to quaternary structure, homotetramer.

It is found in the cell inner membrane. The catalysed reaction is H2O(in) = H2O(out). Functionally, channel that permits osmotically driven movement of water in both directions. It is involved in the osmoregulation and in the maintenance of cell turgor during volume expansion in rapidly growing cells. It mediates rapid entry or exit of water in response to abrupt changes in osmolarity. The chain is Aquaporin Z from Bradyrhizobium diazoefficiens (strain JCM 10833 / BCRC 13528 / IAM 13628 / NBRC 14792 / USDA 110).